A 260-amino-acid chain; its full sequence is Adenosylcobinamide-GDP ribazoletransferase (260 aa).

6 helical membrane passes run 40 to 60 (AFPF…LLLL), 64 to 84 (TDPL…TGAL), 117 to 137 (YGAI…AAII), 142 to 162 (PLAA…AIAW), 188 to 208 (HFAL…PFGL), and 210 to 230 (PLVA…VFIR).

Belongs to the CobS family. Requires Mg(2+) as cofactor.

The protein localises to the cell inner membrane. It catalyses the reaction alpha-ribazole + adenosylcob(III)inamide-GDP = adenosylcob(III)alamin + GMP + H(+). The enzyme catalyses alpha-ribazole 5'-phosphate + adenosylcob(III)inamide-GDP = adenosylcob(III)alamin 5'-phosphate + GMP + H(+). It functions in the pathway cofactor biosynthesis; adenosylcobalamin biosynthesis; adenosylcobalamin from cob(II)yrinate a,c-diamide: step 7/7. In terms of biological role, joins adenosylcobinamide-GDP and alpha-ribazole to generate adenosylcobalamin (Ado-cobalamin). Also synthesizes adenosylcobalamin 5'-phosphate from adenosylcobinamide-GDP and alpha-ribazole 5'-phosphate. The chain is Adenosylcobinamide-GDP ribazoletransferase from Rhizobium etli (strain ATCC 51251 / DSM 11541 / JCM 21823 / NBRC 15573 / CFN 42).